A 154-amino-acid chain; its full sequence is Putative NADPH-dependent 7-cyano-7-deazaguanine reductase (154 aa).

The active-site Proton donor is aspartate 52. Residues 67–69 (VES) and 86–87 (HE) each bind substrate.

This sequence belongs to the GTP cyclohydrolase I family. QueF type 1 subfamily.

It is found in the cytoplasm. It carries out the reaction 7-aminomethyl-7-carbaguanine + 2 NADP(+) = 7-cyano-7-deazaguanine + 2 NADPH + 3 H(+). The protein operates within tRNA modification; tRNA-queuosine biosynthesis. Functionally, catalyzes the NADPH-dependent reduction of 7-cyano-7-deazaguanine (preQ0) to 7-aminomethyl-7-deazaguanine (preQ1). In Streptococcus pneumoniae serotype 4 (strain ATCC BAA-334 / TIGR4), this protein is Putative NADPH-dependent 7-cyano-7-deazaguanine reductase.